The primary structure comprises 164 residues: Phosphopantetheine adenylyltransferase (164 aa).

Ser10 serves as a coordination point for substrate. ATP contacts are provided by residues 10–11 (SF) and His18. Substrate contacts are provided by Lys42, Met74, and Arg88. Residues 89–91 (GLR), Glu99, and 124–130 (YFFVSAR) contribute to the ATP site.

Belongs to the bacterial CoaD family. In terms of assembly, homohexamer. Requires Mg(2+) as cofactor.

Its subcellular location is the cytoplasm. It carries out the reaction (R)-4'-phosphopantetheine + ATP + H(+) = 3'-dephospho-CoA + diphosphate. Its pathway is cofactor biosynthesis; coenzyme A biosynthesis; CoA from (R)-pantothenate: step 4/5. Functionally, reversibly transfers an adenylyl group from ATP to 4'-phosphopantetheine, yielding dephospho-CoA (dPCoA) and pyrophosphate. The protein is Phosphopantetheine adenylyltransferase of Anaeromyxobacter dehalogenans (strain 2CP-1 / ATCC BAA-258).